Reading from the N-terminus, the 421-residue chain is Peptide chain release factor subunit 1 (421 aa).

This sequence belongs to the eukaryotic release factor 1 family. Heterodimer of two subunits, one of which binds GTP.

Its subcellular location is the cytoplasm. Directs the termination of nascent peptide synthesis (translation) in response to the termination codons UAA, UAG and UGA. The chain is Peptide chain release factor subunit 1 (prf1) from Methanocaldococcus jannaschii (strain ATCC 43067 / DSM 2661 / JAL-1 / JCM 10045 / NBRC 100440) (Methanococcus jannaschii).